Here is a 447-residue protein sequence, read N- to C-terminus: Transducin beta-like protein 2 (447 aa).

The interval 38-72 is disordered; the sequence is RSGRPACQKANGFPPDKSSGSKKQKQYQRIRKEKP. Over residues 57–69 the composition is skewed to basic residues; it reads GSKKQKQYQRIRK. WD repeat units lie at residues 88–127, 134–174, 186–226, 228–267, 277–316, 329–367, and 371–409; these read SHSGNISCMDFSSNGKYLATCADDRTIRIWSTKDFLQREH, VELD…DGGY, KHKA…STIN, NQMNNTHAAVSPCGRFVASCGFTPDVKVWEVCFGKKGEFQ, GHSAAVHSFAFSNDSRRMASVSKDGTWKLWDTDVEYKKKQ, AAGAAPCRLALSPNAQVLALASGSSIHLYNTRRGEKEEC, and VHGECIANLSFDITGRFLASCGDRAVRLFHNTPGHRAMV. Lysine 168 participates in a covalent cross-link: Glycyl lysine isopeptide (Lys-Gly) (interchain with G-Cter in SUMO2). Threonine 433 bears the Phosphothreonine; by ATM or ATR mark.

The sequence is that of Transducin beta-like protein 2 (TBL2) from Homo sapiens (Human).